A 647-amino-acid polypeptide reads, in one-letter code: ATP-binding protein Uup (647 aa).

2 consecutive ABC transporter domains span residues 1–253 and 320–546; these read MALI…RVEA and FEME…AKAK. ATP contacts are provided by residues 36–43 and 352–359; these read GRNGAGKS and GPNGCGKT. Over residues 545–563 the composition is skewed to basic and acidic residues; that stretch reads AKKSEPLKEESAVKNDRTS. The disordered stretch occupies residues 545–569; the sequence is AKKSEPLKEESAVKNDRTSKPKSVK. Positions 559-647 are C-terminal domain (CTD), binds DNA; the sequence is NDRTSKPKSV…EKKNLVEGKA (89 aa).

The protein belongs to the ABC transporter superfamily. ABCF family. Uup subfamily.

The protein resides in the cytoplasm. The enzyme catalyses ATP + H2O = ADP + phosphate + H(+). Its function is as follows. Probably plays a role in ribosome assembly or function. May be involved in resolution of branched DNA intermediates that result from template switching in postreplication gaps. Binds DNA and has ATPase activity. The polypeptide is ATP-binding protein Uup (Haemophilus influenzae (strain ATCC 51907 / DSM 11121 / KW20 / Rd)).